The primary structure comprises 239 residues: 1-(5-phosphoribosyl)-5-[(5-phosphoribosylamino)methylideneamino] imidazole-4-carboxamide isomerase (239 aa).

The Proton acceptor role is filled by aspartate 8. Aspartate 129 acts as the Proton donor in catalysis.

It belongs to the HisA/HisF family.

The protein localises to the cytoplasm. The catalysed reaction is 1-(5-phospho-beta-D-ribosyl)-5-[(5-phospho-beta-D-ribosylamino)methylideneamino]imidazole-4-carboxamide = 5-[(5-phospho-1-deoxy-D-ribulos-1-ylimino)methylamino]-1-(5-phospho-beta-D-ribosyl)imidazole-4-carboxamide. Its pathway is amino-acid biosynthesis; L-histidine biosynthesis; L-histidine from 5-phospho-alpha-D-ribose 1-diphosphate: step 4/9. The polypeptide is 1-(5-phosphoribosyl)-5-[(5-phosphoribosylamino)methylideneamino] imidazole-4-carboxamide isomerase (Bacillus cereus (strain AH187)).